A 311-amino-acid polypeptide reads, in one-letter code: p-hydroxybenzoic acid efflux pump subunit AaeA (311 aa).

Residues 11-31 (VGITVLVVVLAVIAIFNVWAF) traverse the membrane as a helical segment.

This sequence belongs to the membrane fusion protein (MFP) (TC 8.A.1) family.

It is found in the cell inner membrane. Its function is as follows. Forms an efflux pump with AaeB. This Yersinia pseudotuberculosis serotype O:1b (strain IP 31758) protein is p-hydroxybenzoic acid efflux pump subunit AaeA.